Here is an 84-residue protein sequence, read N- to C-terminus: Putative membrane protein insertion efficiency factor (84 aa).

Belongs to the UPF0161 family.

The protein localises to the cell inner membrane. Its function is as follows. Could be involved in insertion of integral membrane proteins into the membrane. The sequence is that of Putative membrane protein insertion efficiency factor from Shewanella loihica (strain ATCC BAA-1088 / PV-4).